The following is a 113-amino-acid chain: Large ribosomal subunit protein bL17 (113 aa).

Belongs to the bacterial ribosomal protein bL17 family. Part of the 50S ribosomal subunit. Contacts protein L32.

In Clostridium botulinum (strain Loch Maree / Type A3), this protein is Large ribosomal subunit protein bL17.